Reading from the N-terminus, the 641-residue chain is Chaperone protein DnaK (641 aa).

Thr200 carries the phosphothreonine; by autocatalysis modification. Residues 606 to 623 (AEQGGNADAASGNAQASK) are compositionally biased toward low complexity. The interval 606-628 (AEQGGNADAASGNAQASKAADDV) is disordered.

This sequence belongs to the heat shock protein 70 family.

Acts as a chaperone. This chain is Chaperone protein DnaK, found in Xanthomonas axonopodis pv. citri (strain 306).